The sequence spans 413 residues: Peptide chain release factor 1, mitochondrial (413 aa).

Residue Gln-287 is modified to N5-methylglutamine. The segment at 335–363 (RLEKEEKERKARKSQVSSTNRSDKIRTYN) is disordered.

Belongs to the prokaryotic/mitochondrial release factor family. Post-translationally, methylation of glutamine in the GGQ triplet is conserved from bacteria to mammals. N5-methylated on Gln-287 by MTQ1.

The protein localises to the mitochondrion. Mitochondrial peptide chain release factor that directs the termination of translation in response to the peptide chain termination codons UAA and UAG. In Saccharomyces cerevisiae (strain ATCC 204508 / S288c) (Baker's yeast), this protein is Peptide chain release factor 1, mitochondrial (MRF1).